We begin with the raw amino-acid sequence, 112 residues long: MSDTIPSCEACRPDAEKVDPAKLEKYLSQVPEWRLEERNGVQMISRDYKFKNFALALEFTNKVGAIAEEINHHPELVTEWGKVRVTWWSHTIKGLHELDFAMAKRCEAVFNA.

Belongs to the pterin-4-alpha-carbinolamine dehydratase family.

The catalysed reaction is (4aS,6R)-4a-hydroxy-L-erythro-5,6,7,8-tetrahydrobiopterin = (6R)-L-erythro-6,7-dihydrobiopterin + H2O. The chain is Putative pterin-4-alpha-carbinolamine dehydratase from Hahella chejuensis (strain KCTC 2396).